The sequence spans 192 residues: Putative ripening-related protein 2 (192 aa).

The N-terminal stretch at Met-1 to Gly-26 is a signal peptide.

Belongs to the kiwellin family.

The protein localises to the secreted. The polypeptide is Putative ripening-related protein 2 (Oryza sativa subsp. japonica (Rice)).